Reading from the N-terminus, the 136-residue chain is Phosphoribosyl-AMP cyclohydrolase (136 aa).

Residue Asp-92 participates in Mg(2+) binding. Cys-93 contacts Zn(2+). Asp-94 and Asp-96 together coordinate Mg(2+). Zn(2+)-binding residues include Cys-109 and Cys-116.

Belongs to the PRA-CH family. As to quaternary structure, homodimer. It depends on Mg(2+) as a cofactor. The cofactor is Zn(2+).

The protein localises to the cytoplasm. The catalysed reaction is 1-(5-phospho-beta-D-ribosyl)-5'-AMP + H2O = 1-(5-phospho-beta-D-ribosyl)-5-[(5-phospho-beta-D-ribosylamino)methylideneamino]imidazole-4-carboxamide. It participates in amino-acid biosynthesis; L-histidine biosynthesis; L-histidine from 5-phospho-alpha-D-ribose 1-diphosphate: step 3/9. With respect to regulation, reversibly inhibited by EDTA and free zinc ions. Enzyme is inactivated by dialysis against 1,10-phenanthroline, which is a zinc specific chelator. Its function is as follows. Catalyzes the hydrolysis of the adenine ring of phosphoribosyl-AMP. The polypeptide is Phosphoribosyl-AMP cyclohydrolase (Methanococcus vannielii).